Here is a 236-residue protein sequence, read N- to C-terminus: Peroxisomal coenzyme A diphosphatase NUDT7 (236 aa).

K20 bears the N6-succinyllysine mark. The region spanning 37-169 is the Nudix hydrolase domain; that stretch reads SNKFSVLVPL…QKQITQSGRD (133 aa). Residues 77–98 carry the Nudix box motif; it reads KRDPVDTDDTATALREAQEEVG. E92 and E96 together coordinate Mg(2+). K178 is subject to N6-succinyllysine. The short motif at 234-236 is the Microbody targeting signal element; the sequence is SKL.

The protein belongs to the Nudix hydrolase family. PCD1 subfamily. As to quaternary structure, monomer. The cofactor is Mn(2+). Requires Mg(2+) as cofactor. As to expression, highly expressed in liver, brown adipose tissue and heart. Expressed at intermediate level in lung and kidney and at low level in brain. Expressed in liver, brown adipose tissue and heart at 20 times lower levels than isoform 1.

It is found in the peroxisome. The enzyme catalyses hexanoyl-CoA + H2O = hexanoyl-4'-phosphopantetheine + adenosine 3',5'-bisphosphate + 2 H(+). The catalysed reaction is octanoyl-CoA + H2O = S-octanoyl-4'-phosphopantetheine + adenosine 3',5'-bisphosphate + 2 H(+). It catalyses the reaction butanoyl-CoA + H2O = S-butanoyl-4'-phosphopantetheine + adenosine 3',5'-bisphosphate + 2 H(+). It carries out the reaction decanoyl-CoA + H2O = decanoyl-4'-phosphopantetheine + adenosine 3',5'-bisphosphate + 2 H(+). The enzyme catalyses dodecanoyl-CoA + H2O = S-dodecanoyl-4'-phosphopantetheine + adenosine 3',5'-bisphosphate + 2 H(+). The catalysed reaction is tetradecanoyl-CoA + H2O = tetradecanoyl-4'-phosphopantetheine + adenosine 3',5'-bisphosphate + 2 H(+). It catalyses the reaction choloyl-CoA + H2O = S-choloyl-4'-phosphopantetheine + adenosine 3',5'-bisphosphate + 2 H(+). It carries out the reaction 3alpha,7alpha,12alpha-trihydroxy-5beta-cholestan-26-oyl-CoA + H2O = 3alpha,7alpha,12alpha-trihydroxy-5beta-cholestan-26-oyl-4'-phosphopantetheine + adenosine 3',5'-bisphosphate + 2 H(+). The enzyme catalyses acetyl-CoA + H2O = S-acetyl-4'-phosphopantetheine + adenosine 3',5'-bisphosphate + 2 H(+). The catalysed reaction is CoA + H2O = (R)-4'-phosphopantetheine + adenosine 3',5'-bisphosphate + 2 H(+). It catalyses the reaction propanoyl-CoA + H2O = propanoyl-4'-phosphopantetheine + adenosine 3',5'-bisphosphate + 2 H(+). It carries out the reaction malonyl-CoA + H2O = malonyl-4'-phosphopantetheine + adenosine 3',5'-bisphosphate + 2 H(+). The enzyme catalyses succinyl-CoA + H2O = succinyl-4'-phosphopantetheine + adenosine 3',5'-bisphosphate + 2 H(+). The catalysed reaction is a 5'-end CoA-ribonucleoside in mRNA + H2O = a 5'-end phospho-adenosine-phospho-ribonucleoside in mRNA + (R)-4'-phosphopantetheine + 2 H(+). Its activity is regulated as follows. Inhibited by fluoride. Its function is as follows. Fatty acyl-coenzyme A (CoA) diphosphatase that hydrolyzes fatty acyl-CoA to yield acyl-4'-phosphopantetheine and adenosine 3',5'-bisphosphate. Cleaves CoA, CoA esters and oxidized CoA with similar efficiencies. Preferentially hydrolyzes medium-chain acyl-CoAs and bile acid-CoAs. Has no activity toward NDP-sugars, CDP-alcohols, (deoxy)nucleoside 5'-triphosphates, nucleoside 5'-di or monophosphates, diadenosine polyphosphates, NAD, NADH, NADP, NADPH or thymidine-5'-monophospho-p-nitrophenyl ester. May be required to eliminate oxidized CoA from peroxisomes, or regulate CoA and acyl-CoA levels in this organelle in response to metabolic demand. Does not play a role in U8 snoRNA decapping activity. Binds U8 snoRNA. Exhibits decapping activity towards dpCoA-capped RNAs in vitro. The chain is Peroxisomal coenzyme A diphosphatase NUDT7 from Mus musculus (Mouse).